Consider the following 160-residue polypeptide: Major pollen allergen Car b 1 isoforms 1A and 1B (160 aa).

The protein belongs to the BetVI family.

This is Major pollen allergen Car b 1 isoforms 1A and 1B from Carpinus betulus (European hornbeam).